Here is a 625-residue protein sequence, read N- to C-terminus: uncharacterized protein (625 aa).

Residues 23-51 (CLACRRKKLKCDHGRPCSNCLKRSTIQSC) constitute a DNA-binding region (zn(2)-C6 fungal-type). Residues 93–113 (GTKSQSDYENQQSHNLPSTPS) show a composition bias toward polar residues. The disordered stretch occupies residues 93–119 (GTKSQSDYENQQSHNLPSTPSADAETQ).

It is found in the nucleus. The protein resides in the cytoplasm. Its subcellular location is the cytoskeleton. The protein localises to the spindle. This is an uncharacterized protein from Schizosaccharomyces pombe (strain 972 / ATCC 24843) (Fission yeast).